A 104-amino-acid chain; its full sequence is Large ribosomal subunit protein bL21 (104 aa).

This sequence belongs to the bacterial ribosomal protein bL21 family. As to quaternary structure, part of the 50S ribosomal subunit. Contacts protein L20.

In terms of biological role, this protein binds to 23S rRNA in the presence of protein L20. The protein is Large ribosomal subunit protein bL21 of Thermodesulfovibrio yellowstonii (strain ATCC 51303 / DSM 11347 / YP87).